A 1400-amino-acid polypeptide reads, in one-letter code: Tiny macrocysts protein C (1400 aa).

A run of 8 helical transmembrane segments spans residues 59–79, 112–132, 152–172, 196–216, 240–260, 266–286, 296–316, and 320–340; these read ILTI…GFKQ, IFFW…WYVA, FVST…LIGL, ANLS…IVGF, FDVY…LVDF, SIVY…ILPY, SGFY…MGIN, and TATT…IGYF. Disordered stretches follow at residues 367–393 and 683–712; these read FNEI…SKVT and ERSG…RGKY. A compositionally biased stretch (basic and acidic residues) spans 369-386; the sequence is EITKNEKSKTGDSKEKES. 4 consecutive transmembrane segments (helical) span residues 726–746, 975–995, 1162–1182, and 1342–1362; these read WLMI…LIVL, TMLY…AVLF, VLAI…TYSV, and VLTS…LLLF.

The protein resides in the membrane. The chain is Tiny macrocysts protein C (tmcC) from Dictyostelium discoideum (Social amoeba).